The sequence spans 360 residues: 3-isopropylmalate dehydrogenase (360 aa).

NAD(+) is bound at residue 76–89 (GPKWDTIERDIRPE). Substrate is bound by residues Arg-96, Arg-106, Arg-134, and Asp-224. Mg(2+)-binding residues include Asp-224, Asp-248, and Asp-252. Residue 282–294 (GSAPDIAGQGIAN) participates in NAD(+) binding.

Belongs to the isocitrate and isopropylmalate dehydrogenases family. LeuB type 1 subfamily. In terms of assembly, homodimer. The cofactor is Mg(2+). Mn(2+) is required as a cofactor.

It localises to the cytoplasm. The catalysed reaction is (2R,3S)-3-isopropylmalate + NAD(+) = 4-methyl-2-oxopentanoate + CO2 + NADH. It functions in the pathway amino-acid biosynthesis; L-leucine biosynthesis; L-leucine from 3-methyl-2-oxobutanoate: step 3/4. Catalyzes the oxidation of 3-carboxy-2-hydroxy-4-methylpentanoate (3-isopropylmalate) to 3-carboxy-4-methyl-2-oxopentanoate. The product decarboxylates to 4-methyl-2 oxopentanoate. The sequence is that of 3-isopropylmalate dehydrogenase from Pseudomonas syringae pv. tomato (strain ATCC BAA-871 / DC3000).